A 462-amino-acid polypeptide reads, in one-letter code: Exodeoxyribonuclease 7 large subunit (462 aa).

It belongs to the XseA family. In terms of assembly, heterooligomer composed of large and small subunits.

The protein localises to the cytoplasm. The catalysed reaction is Exonucleolytic cleavage in either 5'- to 3'- or 3'- to 5'-direction to yield nucleoside 5'-phosphates.. In terms of biological role, bidirectionally degrades single-stranded DNA into large acid-insoluble oligonucleotides, which are then degraded further into small acid-soluble oligonucleotides. The chain is Exodeoxyribonuclease 7 large subunit from Proteus mirabilis (strain HI4320).